Consider the following 513-residue polypeptide: Cytochrome P450 72A552 (513 aa).

The chain crosses the membrane as a helical span at residues 2 to 22 (EISVASVTVSVVIAVVTWWVW). Position 460 (Cys460) interacts with heme.

Belongs to the cytochrome P450 family. The cofactor is heme.

It is found in the membrane. It catalyses the reaction oleanolate + reduced [NADPH--hemoprotein reductase] + O2 = hederagenin + oxidized [NADPH--hemoprotein reductase] + H2O + H(+). Catalyzes the oxidation of oleanolate at the C-23 position to form hederagenin. The protein is Cytochrome P450 72A552 of Barbarea vulgaris (Yellow rocket).